The sequence spans 516 residues: Serine carboxypeptidase-like 49 (516 aa).

Positions 1–22 (MEKLTFLSLLLHFVVFIASTIP) are cleaved as a signal peptide. The propeptide occupies 23-82 (SSSFLLNDRTFERSNLPSTRAEKLIRELNLFPQQDLNVIDVADLPLTAAEGPGIVERKFV). 3 disulfide bridges follow: Cys139-Cys379, Cys307-Cys322, and Cys345-Cys350. Residue Asn157 is glycosylated (N-linked (GlcNAc...) asparagine). Residue Ser229 is part of the active site. Asp417 is an active-site residue. Position 420 (Cys420) interacts with substrate. Residue His474 is part of the active site.

This sequence belongs to the peptidase S10 family. In terms of tissue distribution, expressed in roots, senescent leaves and flowers.

It localises to the secreted. Functionally, probable carboxypeptidase. The protein is Serine carboxypeptidase-like 49 (SCPL49) of Arabidopsis thaliana (Mouse-ear cress).